The sequence spans 1295 residues: DNA-directed RNA polymerase subunit beta' (1295 aa).

Zn(2+) is bound by residues Cys-66, Cys-68, Cys-81, and Cys-84. Asp-562, Asp-564, and Asp-566 together coordinate Mg(2+). Cys-901, Cys-975, Cys-982, and Cys-985 together coordinate Zn(2+).

This sequence belongs to the RNA polymerase beta' chain family. As to quaternary structure, the RNAP catalytic core consists of 2 alpha, 1 beta, 1 beta' and 1 omega subunit. When a sigma factor is associated with the core the holoenzyme is formed, which can initiate transcription. The cofactor is Mg(2+). Zn(2+) serves as cofactor.

It catalyses the reaction RNA(n) + a ribonucleoside 5'-triphosphate = RNA(n+1) + diphosphate. Its function is as follows. DNA-dependent RNA polymerase catalyzes the transcription of DNA into RNA using the four ribonucleoside triphosphates as substrates. The sequence is that of DNA-directed RNA polymerase subunit beta' from Rubrobacter xylanophilus (strain DSM 9941 / JCM 11954 / NBRC 16129 / PRD-1).